Here is a 444-residue protein sequence, read N- to C-terminus: MSSYLIKPELSSAYPVVSYAKGSYVYDQTGKKYLDGSSGAVTCNIGHGVRDVTEKLKEQLDQVSFAYRSQFTSEPAEQLAALLAQELPGDVNWSFFVNSGSEAIETAMKIAIQYWQEKKQTQKSIFLSRWSSYHGITLGALSLSGFYERRYRFTHLIERYPAISAPHIYRLNHETEEDFVQTAADELDTMIKRIGSQFIAGFVAEPIIGAAGAAITPPPGYYERLSEVCRTHDVLFIADEVMTGLGRTGRMLATEHWDTVPDIAVLGKGLGAGYAPIAAAVVSDSIIETIKQGSGVIMSGHTYSAHPYSAKAALEVLRYVLKHGLIKQSEKKGAVLKKKLDEAASQSGIIGEVRGKGLLLGIEFVADQKTKKVFPPEQAITQLIVSEAKKRGLIVYPSKAGIDSGEGDAVIIAPPFTISDGEMEELISIFSETVAAVEKNLKKD.

N6-(pyridoxal phosphate)lysine is present on K268.

This sequence belongs to the class-III pyridoxal-phosphate-dependent aminotransferase family. Requires pyridoxal 5'-phosphate as cofactor.

This is an uncharacterized protein from Bacillus subtilis (strain 168).